The following is a 311-amino-acid chain: Giardin subunit alpha-8 (311 aa).

4 Annexin repeats span residues 5 to 73, 75 to 146, 154 to 223, and 227 to 295; these read RKAY…IRCW, NRHE…DRWM, NNVK…AAHY, and EPSK…SLWR.

It belongs to the annexin family. Giardin subunit alpha subfamily.

It localises to the cytoplasm. The protein resides in the cytoskeleton. Functionally, giardins are involved in parasite attachment to the intestinal mucosa and in the cytoskeletal disassembly and reassembly that marks the transition from infectious trophozoite to transmissible cyst. They may interact with other cytoskeletal proteins such as microtubules in the microribbons or crossbridges, to maintain the integrity of the ventral disk. In Giardia intestinalis (Giardia lamblia), this protein is Giardin subunit alpha-8.